The sequence spans 271 residues: Formamidopyrimidine-DNA glycosylase (271 aa).

Catalysis depends on proline 2, which acts as the Schiff-base intermediate with DNA. Glutamate 3 (proton donor) is an active-site residue. Catalysis depends on lysine 58, which acts as the Proton donor; for beta-elimination activity. Residues histidine 92, arginine 111, and arginine 152 each contribute to the DNA site. Residues tyrosine 237–asparagine 271 form an FPG-type zinc finger. The active-site Proton donor; for delta-elimination activity is arginine 261.

It belongs to the FPG family. In terms of assembly, monomer. Requires Zn(2+) as cofactor.

It catalyses the reaction Hydrolysis of DNA containing ring-opened 7-methylguanine residues, releasing 2,6-diamino-4-hydroxy-5-(N-methyl)formamidopyrimidine.. It carries out the reaction 2'-deoxyribonucleotide-(2'-deoxyribose 5'-phosphate)-2'-deoxyribonucleotide-DNA = a 3'-end 2'-deoxyribonucleotide-(2,3-dehydro-2,3-deoxyribose 5'-phosphate)-DNA + a 5'-end 5'-phospho-2'-deoxyribonucleoside-DNA + H(+). In terms of biological role, involved in base excision repair of DNA damaged by oxidation or by mutagenic agents. Acts as a DNA glycosylase that recognizes and removes damaged bases. Has a preference for oxidized purines, such as 7,8-dihydro-8-oxoguanine (8-oxoG). Has AP (apurinic/apyrimidinic) lyase activity and introduces nicks in the DNA strand. Cleaves the DNA backbone by beta-delta elimination to generate a single-strand break at the site of the removed base with both 3'- and 5'-phosphates. This chain is Formamidopyrimidine-DNA glycosylase, found in Wolbachia pipientis subsp. Culex pipiens (strain wPip).